The sequence spans 419 residues: E3 ubiquitin-protein ligase RNF130 (419 aa).

An N-terminal signal peptide occupies residues 1 to 27 (MSGAARAGPARLAALALLTCSLWPTRA). The Extracellular portion of the chain corresponds to 28–194 (DNASQEYYTA…MPPKNFSRGS (167 aa)). 6 N-linked (GlcNAc...) asparagine glycosylation sites follow: Asn29, Asn40, Asn112, Asn135, Asn172, and Asn189. The region spanning 105 to 176 (IALLQRGNCT…SYLEKNISVQ (72 aa)) is the PA domain. Residues 195–217 (LVFVSISFIVLMIISSAWLIFYF) traverse the membrane as a helical segment. The Cytoplasmic portion of the chain corresponds to 218–419 (IQKIRYTNAR…SLNANEVEWF (202 aa)). The segment at 264 to 305 (CAVCIESYKQNDVVRVLPCKHVFHKSCVDPWLSEHCTCPMCK) adopts an RING-type zinc-finger fold. The residue at position 341 (Ser341) is a Phosphoserine.

In testis sections, expressed in interstitial tissue and seminiferous tubules. In tubules, expression is mainly in postmeiotic germ cells and to a much lesser extent in Sertoli cells (at protein level). Expressed at high levels in liver, lung, stomach, heart and thymus.

Its subcellular location is the membrane. The protein resides in the cytoplasm. It catalyses the reaction S-ubiquitinyl-[E2 ubiquitin-conjugating enzyme]-L-cysteine + [acceptor protein]-L-lysine = [E2 ubiquitin-conjugating enzyme]-L-cysteine + N(6)-ubiquitinyl-[acceptor protein]-L-lysine.. The protein operates within protein modification; protein ubiquitination. Its function is as follows. Acts as an E3 ubiquitin-protein ligase. May have a role during the programmed cell death of hematopoietic cells. This is E3 ubiquitin-protein ligase RNF130 from Rattus norvegicus (Rat).